A 285-amino-acid chain; its full sequence is Bifunctional protein FolD (285 aa).

NADP(+) is bound by residues 166–168 (GAS) and I232.

This sequence belongs to the tetrahydrofolate dehydrogenase/cyclohydrolase family. Homodimer.

The catalysed reaction is (6R)-5,10-methylene-5,6,7,8-tetrahydrofolate + NADP(+) = (6R)-5,10-methenyltetrahydrofolate + NADPH. The enzyme catalyses (6R)-5,10-methenyltetrahydrofolate + H2O = (6R)-10-formyltetrahydrofolate + H(+). Its pathway is one-carbon metabolism; tetrahydrofolate interconversion. Functionally, catalyzes the oxidation of 5,10-methylenetetrahydrofolate to 5,10-methenyltetrahydrofolate and then the hydrolysis of 5,10-methenyltetrahydrofolate to 10-formyltetrahydrofolate. The protein is Bifunctional protein FolD of Actinobacillus succinogenes (strain ATCC 55618 / DSM 22257 / CCUG 43843 / 130Z).